The sequence spans 760 residues: MNYYSIQNSRDSSISSIEIRICSSKSIVKKSSRILPNGNIVGEIKTAQTMNYKTLKPENSGLFCEQTFGPIKDFECACGKKYENEFIGFCAICGIEYASSQVRRNRLGYIKLVSPVVHIWYLKYISILLDIPLKSIESIVYSTDGIIFKNFFQKPKKNQILKKETFEITENLNNTYFKDSINLKYSLHVQKNIISYLKNLKQAVFILKTKQDQQLKYNFSYLYYTLNNFYSLSYSFQWEAKKQWNTIIWFFKYKQRMKENFIKIDPLQKKLNDEYFEKTFLFGTSILYCWLKYFDYNFQLLNLERQIRFTVFEIKEEIKELSGILFSYFFQKQQFISFQKKIKKLNWKKNKVFRRLKLIMYFRQAKLQPKWMILSSLPVLPPDLRPIVELGSNKIAVSDLNKSYQTIILRNLRLKKFYNNSAFNEFTEEIRYTKRLLQESVDELIQQDKSKKNNNISSKSLSDILKGKRGRFRQNLLGKRVDYSGRSVIIVDPELKLHECGIPLKMAIELFYPFIIQYLISFNLTKTIPGAKHIIHTKASFLNEIIHFVLNNYLVLLNRAPTLHKLGIQAFKPKLVTGKAIKLHPLVCPAFNADFDGDQMGMHIPLSFESRAESWKLLWSRNNLLLSSMGSPILTPGQDVVLGCYYLTSNLLDKVKTYIKPCHLNKKGENWSIYFNNLNDVLKAYNQNKVNIHTEIWIKWSENIMFENNSLDLRRLEVYSGKFFRFQYENYQINYNLKGYQLSQYIKTTVGRVIFNSLLY.

4 residues coordinate Zn(2+): Cys-76, Cys-78, Cys-90, and Cys-93. Residues Asp-594, Asp-596, and Asp-598 each contribute to the Mg(2+) site.

This sequence belongs to the RNA polymerase beta' chain family. RpoC1 subfamily. In terms of assembly, in plastids the minimal PEP RNA polymerase catalytic core is composed of four subunits: alpha, beta, beta', and beta''. When a (nuclear-encoded) sigma factor is associated with the core the holoenzyme is formed, which can initiate transcription. The cofactor is Mg(2+). Requires Zn(2+) as cofactor.

It is found in the plastid. It localises to the chloroplast. The catalysed reaction is RNA(n) + a ribonucleoside 5'-triphosphate = RNA(n+1) + diphosphate. Its function is as follows. DNA-dependent RNA polymerase catalyzes the transcription of DNA into RNA using the four ribonucleoside triphosphates as substrates. This chain is DNA-directed RNA polymerase subunit beta', found in Bigelowiella natans (Pedinomonas minutissima).